We begin with the raw amino-acid sequence, 651 residues long: UvrABC system protein B (651 aa).

The Helicase ATP-binding domain occupies 25-411 (RGISCGAKEQ…TGGVATEQLI (387 aa)). 38-45 (GVTGSGKT) provides a ligand contact to ATP. The Beta-hairpin signature appears at 91 to 114 (YYDYYQPEAYIPQSDVYIEKDALI). The Helicase C-terminal domain maps to 427–591 (DGQIHDVMCE…IVPRTIQKPV (165 aa)). The segment at 593–615 (TSLSERVGSSRKKVSRDTNTDPA) is disordered. The UVR domain maps to 616-651 (NRDIVELQKEMLLCAENLDFERAVEIRNEIKRLTAP).

Belongs to the UvrB family. Forms a heterotetramer with UvrA during the search for lesions. Interacts with UvrC in an incision complex.

Its subcellular location is the cytoplasm. The UvrABC repair system catalyzes the recognition and processing of DNA lesions. A damage recognition complex composed of 2 UvrA and 2 UvrB subunits scans DNA for abnormalities. Upon binding of the UvrA(2)B(2) complex to a putative damaged site, the DNA wraps around one UvrB monomer. DNA wrap is dependent on ATP binding by UvrB and probably causes local melting of the DNA helix, facilitating insertion of UvrB beta-hairpin between the DNA strands. Then UvrB probes one DNA strand for the presence of a lesion. If a lesion is found the UvrA subunits dissociate and the UvrB-DNA preincision complex is formed. This complex is subsequently bound by UvrC and the second UvrB is released. If no lesion is found, the DNA wraps around the other UvrB subunit that will check the other stand for damage. This Anaplasma marginale (strain St. Maries) protein is UvrABC system protein B.